Consider the following 600-residue polypeptide: 1-deoxy-D-xylulose-5-phosphate synthase (600 aa).

Thiamine diphosphate contacts are provided by residues histidine 57 and 98–100 (GHA). Aspartate 125 serves as a coordination point for Mg(2+). Residues 126 to 127 (AS), asparagine 155, tyrosine 264, and glutamate 343 each bind thiamine diphosphate. Position 155 (asparagine 155) interacts with Mg(2+).

This sequence belongs to the transketolase family. DXPS subfamily. As to quaternary structure, homodimer. It depends on Mg(2+) as a cofactor. Thiamine diphosphate serves as cofactor.

The catalysed reaction is D-glyceraldehyde 3-phosphate + pyruvate + H(+) = 1-deoxy-D-xylulose 5-phosphate + CO2. It participates in metabolic intermediate biosynthesis; 1-deoxy-D-xylulose 5-phosphate biosynthesis; 1-deoxy-D-xylulose 5-phosphate from D-glyceraldehyde 3-phosphate and pyruvate: step 1/1. Functionally, catalyzes the acyloin condensation reaction between C atoms 2 and 3 of pyruvate and glyceraldehyde 3-phosphate to yield 1-deoxy-D-xylulose-5-phosphate (DXP). This chain is 1-deoxy-D-xylulose-5-phosphate synthase, found in Fusobacterium nucleatum subsp. nucleatum (strain ATCC 25586 / DSM 15643 / BCRC 10681 / CIP 101130 / JCM 8532 / KCTC 2640 / LMG 13131 / VPI 4355).